The primary structure comprises 173 residues: Crossover junction endodeoxyribonuclease RuvC (173 aa).

Active-site residues include aspartate 8, glutamate 67, and aspartate 139. Mg(2+)-binding residues include aspartate 8, glutamate 67, and aspartate 139.

This sequence belongs to the RuvC family. In terms of assembly, homodimer which binds Holliday junction (HJ) DNA. The HJ becomes 2-fold symmetrical on binding to RuvC with unstacked arms; it has a different conformation from HJ DNA in complex with RuvA. In the full resolvosome a probable DNA-RuvA(4)-RuvB(12)-RuvC(2) complex forms which resolves the HJ. The cofactor is Mg(2+).

It is found in the cytoplasm. The enzyme catalyses Endonucleolytic cleavage at a junction such as a reciprocal single-stranded crossover between two homologous DNA duplexes (Holliday junction).. Its function is as follows. The RuvA-RuvB-RuvC complex processes Holliday junction (HJ) DNA during genetic recombination and DNA repair. Endonuclease that resolves HJ intermediates. Cleaves cruciform DNA by making single-stranded nicks across the HJ at symmetrical positions within the homologous arms, yielding a 5'-phosphate and a 3'-hydroxyl group; requires a central core of homology in the junction. The consensus cleavage sequence is 5'-(A/T)TT(C/G)-3'. Cleavage occurs on the 3'-side of the TT dinucleotide at the point of strand exchange. HJ branch migration catalyzed by RuvA-RuvB allows RuvC to scan DNA until it finds its consensus sequence, where it cleaves and resolves the cruciform DNA. This Vibrio vulnificus (strain CMCP6) protein is Crossover junction endodeoxyribonuclease RuvC.